A 291-amino-acid polypeptide reads, in one-letter code: Cell division protein ZipA (291 aa).

Residues 1-5 lie on the Periplasmic side of the membrane; it reads MQELR. The helical transmembrane segment at 6-26 threads the bilayer; sequence FVLIIVGALAIAALLFHGLWT. Over 27-291 the chain is Cytoplasmic; the sequence is SKKEGKSKFG…QEFKVRAAQA (265 aa). Residues 29 to 51 are compositionally biased toward basic and acidic residues; sequence KEGKSKFGDKPLRKMKVESDDPP. Disordered regions lie at residues 29–61 and 92–119; these read KEGK…EDDF and ELDE…VQPQ.

This sequence belongs to the ZipA family. In terms of assembly, interacts with FtsZ via their C-terminal domains.

Its subcellular location is the cell inner membrane. Functionally, essential cell division protein that stabilizes the FtsZ protofilaments by cross-linking them and that serves as a cytoplasmic membrane anchor for the Z ring. Also required for the recruitment to the septal ring of downstream cell division proteins. This Vibrio cholerae serotype O1 (strain ATCC 39541 / Classical Ogawa 395 / O395) protein is Cell division protein ZipA.